A 960-amino-acid polypeptide reads, in one-letter code: MKRGIDIVQALKNSKRSKSSDDSVESKLSKASPDLSQYAAVQISKEDVTVNPEVKSTIDNHKKEPPSIASSIKKSPKTVIGKHANSTKKPKKRTPLDQQFIDLKNEYPDCVLAIQVGYKYKFFGVDAVPVSRILNIMFIPGNLTERDATHDKFAYCSVPDNRLHIHLQRLLTNGLKVAVVSQTESAVLREAESSKGLFLREVTAIYTKATYIEEGSGDFISCITWNGTSAGAVTVQPCTGEIIVEDFSEKEPEALSELQTYLHHLRPSEIIVTDNEATKENDKLSRLLKSFGGARISYKPFDEVSPIEELLPASIANYYVTNHSTTTTQCISQLITYLKDFSLDQIFTVPSNVSKFSTKMYMNLPGNTLKALEIFQNSSGTEKGTLFWHLDHTHTKMGRRMLQKWVSKPLIDNASIQERLDAIESLMNYNYAVEVFEGIIKKIGRDESDWEKSMIKIHYTANGSQNRVTRKEVVQLLLQFRSVIDTVYKFKSSFKDSSISKLLQSMFSELAELASTPIVNDLLSRVKIEAVYREEVEDQKKEFFDLDSHPHEGIKSELNAISELEQALQDELVEIKKIIKKPVDYMTVSREPYLIALRGDSGPQDWLKISATKTVTRYRPPKVSKLYKELLYHQEKLIQQCDEAFATFLKDIDSHYTYFSRLIKIVAEIDCLLSLKATSSSNSGYSKPILSDKQMIKAKRSRNPVIENLTSTSQYVANDIEISYDENRVLIITGPNMGGKSSYVKQVALIALMTQIGCYLPCESAIVGIFDTILVRMGAEDNILKGESTFMVEMSECSTIIKSLTNKSLVILDEIGRGTGTEDGIAIAYSIISYLIEEPRLPLTLFITHYPSLKVLEDTHPKNVANYHMGFMEVAKADQEWPDVTFLYTLKRGVVSNSYGLNVARLAGIPSEIITKAFKVAEALKQDIEDSELSSMGQILKSEQSSASKLVEIDRIVSYI.

Disordered stretches follow at residues 1–35 (MKRG…SPDL) and 53–93 (EVKS…PKKR). 2 stretches are compositionally biased toward basic and acidic residues: residues 18-28 (KSSDDSVESKL) and 56-65 (STIDNHKKEP). A mispair-binding domain region spans residues 87–209 (TKKPKKRTPL…REVTAIYTKA (123 aa)). 734–741 (GPNMGGKS) is a binding site for ATP.

It belongs to the DNA mismatch repair MutS family. MSH3 subfamily. Heterodimer consisting of MSH2-MSH3 (MutS beta). Forms a ternary complex with MutL alpha (MLH1-PMS1).

Its subcellular location is the nucleus. In terms of biological role, component of the post-replicative DNA mismatch repair system (MMR). Heterodimerizes with MSH2 to form MutS beta, which binds to DNA mismatches thereby initiating DNA repair. MSH3 provides substrate-binding and substrate specificity to the complex. When bound, the MutS beta heterodimer bends the DNA helix and shields approximately 20 base pairs. Acts mainly to repair insertion-deletion loops (IDLs) from 2 to 13 nucleotides in size, but can also repair base-base and single insertion-deletion mismatches that occur during replication. After mismatch binding, forms a ternary complex with the MutL alpha heterodimer, which is thought to be responsible for directing the downstream MMR events, including strand discrimination, excision, and resynthesis. ATP binding and hydrolysis play a pivotal role in mismatch repair functions. This Meyerozyma guilliermondii (strain ATCC 6260 / CBS 566 / DSM 6381 / JCM 1539 / NBRC 10279 / NRRL Y-324) (Yeast) protein is DNA mismatch repair protein MSH3 (MSH3).